A 452-amino-acid chain; its full sequence is 3-phosphoshikimate 1-carboxyvinyltransferase (452 aa).

The span at 1–17 (MSHAAAAKPATARKSQA) shows a compositional bias: low complexity. Residues 1-26 (MSHAAAAKPATARKSQALSGTARVPG) form a disordered region. 3-phosphoshikimate-binding residues include Lys28, Ser29, and Arg33. Lys28 is a phosphoenolpyruvate binding site. Phosphoenolpyruvate contacts are provided by Gly100 and Arg128. 4 residues coordinate 3-phosphoshikimate: Ser174, Gln176, Asp327, and Lys354. Gln176 contributes to the phosphoenolpyruvate binding site. Catalysis depends on Asp327, which acts as the Proton acceptor. Residues Arg358 and Arg409 each coordinate phosphoenolpyruvate.

The protein belongs to the EPSP synthase family. In terms of assembly, monomer.

Its subcellular location is the cytoplasm. It carries out the reaction 3-phosphoshikimate + phosphoenolpyruvate = 5-O-(1-carboxyvinyl)-3-phosphoshikimate + phosphate. It participates in metabolic intermediate biosynthesis; chorismate biosynthesis; chorismate from D-erythrose 4-phosphate and phosphoenolpyruvate: step 6/7. Catalyzes the transfer of the enolpyruvyl moiety of phosphoenolpyruvate (PEP) to the 5-hydroxyl of shikimate-3-phosphate (S3P) to produce enolpyruvyl shikimate-3-phosphate and inorganic phosphate. The polypeptide is 3-phosphoshikimate 1-carboxyvinyltransferase (Mesorhizobium japonicum (strain LMG 29417 / CECT 9101 / MAFF 303099) (Mesorhizobium loti (strain MAFF 303099))).